Consider the following 111-residue polypeptide: Colipase (111 aa).

The signal sequence occupies residues 1–17; the sequence is MEKVLALVLLTLAVAYA. The propeptide at 18–22 is enterostatin, activation peptide; the sequence is APDPR. 5 disulfides stabilise this stretch: Cys34–Cys45, Cys40–Cys56, Cys44–Cys78, Cys66–Cys86, and Cys80–Cys104.

Belongs to the colipase family. As to quaternary structure, forms a 1:1 stoichiometric complex with pancreatic lipase. As to expression, expressed by the pancreas.

The protein resides in the secreted. Colipase is a cofactor of pancreatic lipase. It allows the lipase to anchor itself to the lipid-water interface. Without colipase the enzyme is washed off by bile salts, which have an inhibitory effect on the lipase. Its function is as follows. Enterostatin has a biological activity as a satiety signal. This chain is Colipase (CLPS), found in Myocastor coypus (Coypu).